A 309-amino-acid polypeptide reads, in one-letter code: MRGFKIFSGSAHTLFSNEVAKCLDISLSKTTINRFSDGEINVQIGESVRGKDIFIIQPTCAPANDHLMELLIMTDALKRSGAKNINAVIPYFGYARQDRKVVPRVPITAKLVANLIEQSGIHRVITMDLHAEQIQGFFDIPVDNLYGSIVFRDYLKTKSFKNPIVASPDIGGVARARHFADRIGMDLVIVDKKRERANESEVMNIIGDVDGKDVILIDDMIDTAGTMCKAADVLKSRGANSVIALGTHPVLSGPALERIAKSALDEVVVTNSIPLRVAHPKIKVLSVAPLFAEVIRRICHNESVNSLFF.

Residues 37 to 39 (DGE) and 96 to 97 (RQ) each bind ATP. 2 residues coordinate Mg(2+): His130 and Asp169. Residue Lys192 is part of the active site. D-ribose 5-phosphate-binding positions include Arg194, Asp218, and 222–226 (DTAGT).

This sequence belongs to the ribose-phosphate pyrophosphokinase family. Class I subfamily. As to quaternary structure, homohexamer. Mg(2+) is required as a cofactor.

It localises to the cytoplasm. The catalysed reaction is D-ribose 5-phosphate + ATP = 5-phospho-alpha-D-ribose 1-diphosphate + AMP + H(+). It participates in metabolic intermediate biosynthesis; 5-phospho-alpha-D-ribose 1-diphosphate biosynthesis; 5-phospho-alpha-D-ribose 1-diphosphate from D-ribose 5-phosphate (route I): step 1/1. Functionally, involved in the biosynthesis of the central metabolite phospho-alpha-D-ribosyl-1-pyrophosphate (PRPP) via the transfer of pyrophosphoryl group from ATP to 1-hydroxyl of ribose-5-phosphate (Rib-5-P). This chain is Ribose-phosphate pyrophosphokinase, found in Helicobacter hepaticus (strain ATCC 51449 / 3B1).